Reading from the N-terminus, the 310-residue chain is Fucose-specific lectin (310 aa).

Tandem repeats lie at residues 1 to 53, 54 to 103, 104 to 151, 152 to 209, 210 to 256, and 257 to 310. The 6 X approximate tandem repeats stretch occupies residues 1–310; that stretch reads MSTPGAQEVL…LGRRALPPAE (310 aa). Residues R25, E37, W44, R73, E85, W94, R126, E138, W146, R177, Q189, W198, R230, Q242, R277, and E291 each contribute to the beta-L-fucose site.

The protein belongs to the fungal fucose-specific lectin family.

Functionally, lectin that specifically binds to L-fucose and weakly reacts with mannose and N-acetyl-neuraminic acid. Has strongest preference for the alpha-1,6-fucosylated chain (core fucose) on glycoproteins among alpha-1,2-, alpha-1,3-, alpha-1,4-, and alpha-1,6-fucosylated chains. Binds to fucose residues of IgE in mice and human, causing antigen-independent IgE-mediated mast cell activation and anaphylactoid reactions in mice and is possibly implicated in allergic response to Aspergillus oryzae in humans. Induces secretion of pro-inflammatory cytokines IL6 and IL8 implicated in ocular diseases such as mycotic keratitis, probably through its interaction with host toll-like receptors TLR2 and TLR4, followed by up-regulation of pro-inflammatory cytokines. The sequence is that of Fucose-specific lectin from Aspergillus oryzae (Yellow koji mold).